The primary structure comprises 87 residues: U3-theraphotoxin-Hhn1a 6 (87 aa).

Positions 1 to 24 (MVNMKASMFLTFAGLVLLFVVCYA) are cleaved as a signal peptide. The propeptide occupies 25 to 52 (SESEKKEFPKEMLSSIFAVDNDFKQEER). Cystine bridges form between cysteine 54-cysteine 67, cysteine 61-cysteine 72, and cysteine 66-cysteine 79.

Belongs to the neurotoxin 10 (Hwtx-1) family. 51 (Hntx-8) subfamily. Hntx-8 sub-subfamily. Expressed by the venom gland.

The protein resides in the secreted. Ion channel inhibitor. This chain is U3-theraphotoxin-Hhn1a 6, found in Cyriopagopus hainanus (Chinese bird spider).